We begin with the raw amino-acid sequence, 596 residues long: Nuclear receptor subfamily 2 group C member 2 (596 aa).

Phosphoserine; by MAPK is present on Ser-19. Ser-46 is subject to Phosphoserine. 2 positions are modified to phosphoserine; by MAPK: Ser-55 and Ser-68. Position 98 is a phosphoserine (Ser-98). The nuclear receptor DNA-binding region spans 114–189 (VEYCVVCGDK…MGMKMESVQS (76 aa)). NR C4-type zinc fingers lie at residues 117-137 (CVVCGDKASGRHYGAVSCEGC) and 153-177 (CRSSQDCIINKHHRNRCQFCRLKKC). Residue Lys-192 forms a Glycyl lysine isopeptide (Lys-Gly) (interchain with G-Cter in SUMO2) linkage. Ser-219 carries the phosphoserine modification. Lys-231 carries the post-translational modification N6-acetyllysine. In terms of domain architecture, NR LBD spans 341 to 583 (GSIHVISRDQ…SIIPYILKME (243 aa)).

This sequence belongs to the nuclear hormone receptor family. NR2 subfamily. As to quaternary structure, homodimer; can bind DNA as homodimer. Heterodimer; binds DNA as a heterodimer with NR2C1 required for chromatin remodeling and for binding to promoter regions such as globin DR1 repeats. Interacts with NR2C2AP; the interaction represses selective NR2C2-mediated transcriptional activity. Interacts with PCAF; the interaction preferentially occurs on the non-phosphorylated form and induces NR2C2-mediated transactivation activity and does not require the ligand-binding domain. Interacts (MAPK-mediated phosphorylated form) with NRIP1; the interaction promotes repression of NR2C2-mediated activity. Interacts with NLRP10. Interacts (via ligand-binding region) with transcriptional corepressor JAZF1; the interaction promotes NR2C2-mediated transcriptional repression. In terms of processing, phosphorylation on Ser-19 and Ser-68 is an important regulator of NR2C2-mediated transcriptional activity. Phosphorylation on these residues recruits the corepressor, NRIP1, leading to transcripional repression, whereas the non-phosphorylated form preferentially recruits the coactivator, PCAF. Expressed in hepatocytes. Also expressed in granule cells of the hippocampus and the cerebellum.

It is found in the nucleus. In terms of biological role, orphan nuclear receptor that can act as a repressor or activator of transcription. An important repressor of nuclear receptor signaling pathways such as retinoic acid receptor, retinoid X, vitamin D3 receptor, thyroid hormone receptor and estrogen receptor pathways. May regulate gene expression during the late phase of spermatogenesis. Activates transcriptional activity of LHCG and is antagonist of PPARA-mediated transactivation. Together with NR2C1, forms the core of the DRED (direct repeat erythroid-definitive) complex that represses embryonic and fetal globin transcription including that of GATA1. Binds to hormone response elements (HREs) consisting of two 5'-AGGTCA-3' half site direct repeat consensus sequences. Plays a fundamental role in early embryonic development and embryonic stem cells. Required for normal spermatogenesis and cerebellum development. Appears to be important for neurodevelopmentally regulated behavior. The polypeptide is Nuclear receptor subfamily 2 group C member 2 (Nr2c2) (Rattus norvegicus (Rat)).